Reading from the N-terminus, the 355-residue chain is 3-dehydroquinate synthase (355 aa).

NAD(+) contacts are provided by residues 98–102, 122–123, Lys-135, Lys-144, and 162–165; these read GVIGD, TT, and TLNT. Glu-177, His-240, and His-257 together coordinate Zn(2+).

This sequence belongs to the sugar phosphate cyclases superfamily. Dehydroquinate synthase family. The cofactor is Co(2+). Zn(2+) is required as a cofactor. NAD(+) serves as cofactor.

Its subcellular location is the cytoplasm. It carries out the reaction 7-phospho-2-dehydro-3-deoxy-D-arabino-heptonate = 3-dehydroquinate + phosphate. It functions in the pathway metabolic intermediate biosynthesis; chorismate biosynthesis; chorismate from D-erythrose 4-phosphate and phosphoenolpyruvate: step 2/7. Functionally, catalyzes the conversion of 3-deoxy-D-arabino-heptulosonate 7-phosphate (DAHP) to dehydroquinate (DHQ). The sequence is that of 3-dehydroquinate synthase from Dictyoglomus thermophilum (strain ATCC 35947 / DSM 3960 / H-6-12).